Reading from the N-terminus, the 147-residue chain is Large ribosomal subunit protein bL9 (147 aa).

It belongs to the bacterial ribosomal protein bL9 family.

Functionally, binds to the 23S rRNA. This chain is Large ribosomal subunit protein bL9, found in Clostridium novyi (strain NT).